The chain runs to 906 residues: Ectonucleotide pyrophosphatase/phosphodiesterase family member 1 (906 aa).

The tract at residues 1–22 is disordered; that stretch reads MERDGDQAGHGPRHGSAGNGRE. Over 1 to 58 the chain is Cytoplasmic; the sequence is MERDGDQAGHGPRHGSAGNGRELESPAAASLLAPMDLGEEPLEKAERARPAKDPNTYK. Serine 25 bears the Phosphoserine mark. The Di-leucine motif motif lies at 27–34; it reads AAASLLAP. A helical; Signal-anchor for type II membrane protein membrane pass occupies residues 59-79; sequence VLSLVLSVCVLTTILGCIFGL. Topologically, residues 80 to 906 are extracellular; it reads KPSCAKEVKS…THLPIFSQED (827 aa). SMB domains are found at residues 86–126 and 127–171; these read EVKS…VEPT and HIWT…DKKS. Cystine bridges form between cysteine 90–cysteine 104, cysteine 94–cysteine 122, cysteine 102–cysteine 115, cysteine 108–cysteine 114, cysteine 131–cysteine 148, cysteine 136–cysteine 166, cysteine 146–cysteine 159, cysteine 152–cysteine 158, cysteine 177–cysteine 223, and cysteine 185–cysteine 397. N-linked (GlcNAc...) asparagine glycosylation is present at asparagine 161. Residues 173–573 are phosphodiesterase; sequence VEETCESIDT…APNNGSHGSL (401 aa). Aspartate 200, threonine 238, and asparagine 259 together coordinate AMP. Residues aspartate 200 and threonine 238 each contribute to the Zn(2+) site. The active-site AMP-threonine intermediate is the threonine 238. Residues threonine 238 and asparagine 259 each coordinate CMP. Positions 238 and 259 each coordinate dTMP. Residues threonine 238 and asparagine 259 each contribute to the GMP site. Threonine 238 carries the phosphothreonine modification. N-linked (GlcNAc...) asparagine glycosylation is present at asparagine 267. Residues leucine 272, lysine 277, and tyrosine 322 each contribute to the GMP site. 2 residues coordinate AMP: lysine 277 and tyrosine 322. CMP is bound by residues lysine 277 and tyrosine 322. Tyrosine 322 is a binding site for dTMP. Asparagine 323 carries an N-linked (GlcNAc...) asparagine glycan. Aspartate 358 is an AMP binding site. Positions 358, 362, 405, and 406 each coordinate Zn(2+). Residue aspartate 358 coordinates CMP. Position 358 (aspartate 358) interacts with dTMP. Aspartate 358 contacts GMP. Residue histidine 362 coordinates 2',3'-cGAMP. Position 406 (histidine 406) interacts with AMP. Histidine 406 provides a ligand contact to CMP. Histidine 406 is a binding site for dTMP. Residue histidine 406 coordinates GMP. 6 cysteine pairs are disulfide-bonded: cysteine 413-cysteine 512, cysteine 462-cysteine 849, cysteine 596-cysteine 653, cysteine 607-cysteine 707, cysteine 609-cysteine 692, and cysteine 819-cysteine 829. Asparagine 459 carries N-linked (GlcNAc...) asparagine glycosylation. Serine 514 lines the 2',3'-cGAMP pocket. Position 517 (histidine 517) interacts with AMP. Histidine 517 lines the Zn(2+) pocket. Histidine 517 is a CMP binding site. Histidine 517 contributes to the dTMP binding site. GMP is bound at residue histidine 517. N-linked (GlcNAc...) asparagine glycans are attached at residues asparagine 567 and asparagine 624. A linker region spans residues 579–628; sequence KPIYNPSHPKEEGFLSQCPIKSTSNDLGCTCDPWIVPIKDFEKQLNLTTE. The nuclease-like domain stretch occupies residues 635 to 906; sequence HMTVPYGRPR…THLPIFSQED (272 aa). Positions 781, 783, 785, 787, and 789 each coordinate Ca(2+).

Belongs to the nucleotide pyrophosphatase/phosphodiesterase family. As to quaternary structure, ectonucleotide pyrophosphatase/phosphodiesterase family member 1: Homodimer. Ectonucleotide pyrophosphatase/phosphodiesterase family member 1: Interacts with INSR; leading to inhibit INSR autophosphorylation and subsequent activation of INSR kinase activity. Ectonucleotide pyrophosphatase/phosphodiesterase family member 1, secreted form: Monomeric. It depends on Zn(2+) as a cofactor. N-glycosylated. Post-translationally, the secreted form is produced through cleavage at Lys-85 by intracellular processing. In terms of tissue distribution, selectively expressed on the surface of antibody-secreting cells. Expressed in osteocytes and osteoclasts.

Its subcellular location is the cell membrane. The protein localises to the basolateral cell membrane. It localises to the secreted. The catalysed reaction is Hydrolytically removes 5'-nucleotides successively from the 3'-hydroxy termini of 3'-hydroxy-terminated oligonucleotides.. It carries out the reaction a ribonucleoside 5'-triphosphate + H2O = a ribonucleoside 5'-phosphate + diphosphate + H(+). It catalyses the reaction ATP + H2O = AMP + diphosphate + H(+). The enzyme catalyses UTP + H2O = UMP + diphosphate + H(+). The catalysed reaction is GTP + H2O = GMP + diphosphate + H(+). It carries out the reaction CTP + H2O = CMP + diphosphate + H(+). It catalyses the reaction 2',3'-cGAMP + 2 H2O = GMP + AMP + 2 H(+). The enzyme catalyses P(1),P(4)-bis(5'-adenosyl) tetraphosphate + H2O = AMP + ATP + 2 H(+). The catalysed reaction is 3',5'-cyclic AMP + H2O = AMP + H(+). With respect to regulation, at low concentrations of ATP, a phosphorylated intermediate is formed which inhibits further hydrolysis. Nucleotide pyrophosphatase that generates diphosphate (PPi) and functions in bone mineralization and soft tissue calcification by regulating pyrophosphate levels. PPi inhibits bone mineralization and soft tissue calcification by binding to nascent hydroxyapatite crystals, thereby preventing further growth of these crystals. Preferentially hydrolyzes ATP, but can also hydrolyze other nucleoside 5' triphosphates such as GTP, CTP and UTP to their corresponding monophosphates with release of pyrophosphate, as well as diadenosine polyphosphates, and also 3',5'-cAMP to AMP. May also be involved in the regulation of the availability of nucleotide sugars in the endoplasmic reticulum and Golgi, and the regulation of purinergic signaling. Inhibits ectopic joint calcification and maintains articular chondrocytes by repressing hedgehog signaling; it is however unclear whether hedgehog inhibition is direct or indirect. Appears to modulate insulin sensitivity. Also involved in melanogenesis. Also able to hydrolyze 2',3'-cGAMP (cyclic GMP-AMP), a second messenger that activates TMEM173/STING and triggers type-I interferon production. 2',3'-cGAMP degradation takes place in the lumen or extracellular space, and not in the cytosol where it is produced; the role of 2',3'-cGAMP hydrolysis is therefore unclear. Not able to hydrolyze the 2',3'-cGAMP linkage isomer 3',3'-cGAMP. The sequence is that of Ectonucleotide pyrophosphatase/phosphodiesterase family member 1 from Mus musculus (Mouse).